Consider the following 412-residue polypeptide: uncharacterized protein (412 aa).

Positions 1 to 21 are cleaved as a signal peptide; that stretch reads MIIPMLRILLIVLFVLNLVTS. Disordered stretches follow at residues 85 to 134, 250 to 294, and 327 to 357; these read QPPA…STTT, STTE…TPGT, and VELG…HVRE. The span at 88–105 shows a compositional bias: low complexity; that stretch reads ASLTSLPAAPPSAQVAPP. A compositionally biased stretch (polar residues) spans 124 to 134; that stretch reads TPQASISSTTT. 2 stretches are compositionally biased toward low complexity: residues 250–259 and 266–293; these read STTENTTEQS and TTST…GTPG. The span at 330-347 shows a compositional bias: acidic residues; the sequence is GEGDDDEENDDDSSEEEE. Residues 348–357 are compositionally biased toward basic and acidic residues; the sequence is TKPPARHVRE. Residues 371 to 408 form the ShKT domain; it reads CDEEEDDKGKICKLWAAGGLCGTHKPTMFLFCRKTCLC.

This is an uncharacterized protein from Caenorhabditis elegans.